A 242-amino-acid polypeptide reads, in one-letter code: Type III pantothenate kinase (242 aa).

7 to 14 provides a ligand contact to ATP; sequence DLGNSRFK. Residues tyrosine 91 and 98–101 each bind substrate; that span reads GVDR. Residue aspartate 100 is the Proton acceptor of the active site. Threonine 121 contributes to the ATP binding site. Position 171 (threonine 171) interacts with substrate.

Belongs to the type III pantothenate kinase family. In terms of assembly, homodimer. NH4(+) is required as a cofactor. K(+) serves as cofactor.

The protein localises to the cytoplasm. The catalysed reaction is (R)-pantothenate + ATP = (R)-4'-phosphopantothenate + ADP + H(+). Its pathway is cofactor biosynthesis; coenzyme A biosynthesis; CoA from (R)-pantothenate: step 1/5. Functionally, catalyzes the phosphorylation of pantothenate (Pan), the first step in CoA biosynthesis. The polypeptide is Type III pantothenate kinase (Xanthomonas euvesicatoria pv. vesicatoria (strain 85-10) (Xanthomonas campestris pv. vesicatoria)).